We begin with the raw amino-acid sequence, 465 residues long: Neutrophil collagenase (465 aa).

A signal peptide spans 1 to 20 (MFRLKTLPLLIFLHTQLANA). A propeptide spans 21-100 (FPVPEHLEEK…CGVPDSGDFL (80 aa)) (activation peptide). An N-linked (GlcNAc...) asparagine glycan is attached at Asn55. The Cysteine switch signature appears at 89–96 (PRCGVPDS). Position 91 (Cys91) interacts with Zn(2+). Asn112 carries N-linked (GlcNAc...) asparagine glycosylation. Asp157 provides a ligand contact to Ca(2+). The Zn(2+) site is built by His167 and Asp169. Residues Asp174, Gly175, Asn177, and Ile179 each contribute to the Ca(2+) site. Position 182 (His182) interacts with Zn(2+). Ca(2+)-binding residues include Gly189, Gly191, and Asp193. Residue His195 coordinates Zn(2+). Ca(2+) is bound by residues Asp197 and Glu200. Position 217 (His217) interacts with Zn(2+). Residue Glu218 is part of the active site. Residues His221 and His227 each contribute to the Zn(2+) site. Hemopexin repeat units follow at residues 276–325 (PKAC…WPFL), 326–372 (PNGL…GFPR), 374–420 (VQAI…FPGV), and 421–464 (NCRV…WLNC). Cys279 and Cys464 are disulfide-bonded. Asp286 lines the Ca(2+) pocket. Residues Asp378 and Asp425 each contribute to the Ca(2+) site.

This sequence belongs to the peptidase M10A family. Ca(2+) is required as a cofactor. It depends on Zn(2+) as a cofactor. As to expression, neutrophils. Expressed in uterus. Low levels in kidney and muscle.

Its subcellular location is the cytoplasmic granule. The protein localises to the secreted. The protein resides in the extracellular space. It localises to the extracellular matrix. The catalysed reaction is Cleavage of interstitial collagens in the triple helical domain. Unlike EC 3.4.24.7, this enzyme cleaves type III collagen more slowly than type I.. Cannot be activated without removal of the activation peptide. Activated by matrilysin. In terms of biological role, can degrade fibrillar type I, II, and III collagens. May play a role in the degradation of collagen fibers during uterine involution. This chain is Neutrophil collagenase (Mmp8), found in Mus musculus (Mouse).